We begin with the raw amino-acid sequence, 388 residues long: Lipid-A-disaccharide synthase (388 aa).

The protein belongs to the LpxB family.

The enzyme catalyses a lipid X + a UDP-2-N,3-O-bis[(3R)-3-hydroxyacyl]-alpha-D-glucosamine = a lipid A disaccharide + UDP + H(+). It participates in bacterial outer membrane biogenesis; LPS lipid A biosynthesis. Condensation of UDP-2,3-diacylglucosamine and 2,3-diacylglucosamine-1-phosphate to form lipid A disaccharide, a precursor of lipid A, a phosphorylated glycolipid that anchors the lipopolysaccharide to the outer membrane of the cell. In Burkholderia mallei (strain NCTC 10247), this protein is Lipid-A-disaccharide synthase.